The following is a 184-amino-acid chain: Ferredoxin-thioredoxin reductase subunit A2, chloroplastic (184 aa).

The transit peptide at 1 to 71 (MTNSYALSPA…SRKNPKSTIR (71 aa)) directs the protein to the chloroplast.

This sequence belongs to the ferredoxin thioredoxin reductase alpha subunit family. In terms of assembly, heterodimer of subunit A (variable subunit) and subunit B (catalytic subunit). Heterodimeric FTR forms a complex with ferredoxin and thioredoxin.

The protein localises to the plastid. It is found in the chloroplast. In terms of biological role, variable subunit of the ferredoxin-thioredoxin reductase (FTR), which catalyzes the two-electron reduction of thioredoxins by the electrons provided by reduced ferredoxin. In Arabidopsis thaliana (Mouse-ear cress), this protein is Ferredoxin-thioredoxin reductase subunit A2, chloroplastic.